Here is a 715-residue protein sequence, read N- to C-terminus: Polyribonucleotide nucleotidyltransferase (715 aa).

Mg(2+) is bound by residues Asp488 and Asp494. A KH domain is found at 555 to 614; that stretch reads PRIEVMHIPTDKIRDVIGTGGKVIREIVEKTGAKINIEDDGTVKIASSNGKEIEAARKWI. An S1 motif domain is found at 624–692; it reads GEIYEGTVVK…ERGKVRLSMK (69 aa).

Belongs to the polyribonucleotide nucleotidyltransferase family. Requires Mg(2+) as cofactor.

It is found in the cytoplasm. The catalysed reaction is RNA(n+1) + phosphate = RNA(n) + a ribonucleoside 5'-diphosphate. Its function is as follows. Involved in mRNA degradation. Catalyzes the phosphorolysis of single-stranded polyribonucleotides processively in the 3'- to 5'-direction. The protein is Polyribonucleotide nucleotidyltransferase of Chelativorans sp. (strain BNC1).